A 234-amino-acid polypeptide reads, in one-letter code: Enolase-phosphatase E1 (234 aa).

The tract at residues 212 to 234 is disordered; that stretch reads RPGNYPQPQHSHFKISSFEGLNP.

Belongs to the HAD-like hydrolase superfamily. MasA/MtnC family. As to quaternary structure, monomer. It depends on Mg(2+) as a cofactor.

The enzyme catalyses 5-methylsulfanyl-2,3-dioxopentyl phosphate + H2O = 1,2-dihydroxy-5-(methylsulfanyl)pent-1-en-3-one + phosphate. It participates in amino-acid biosynthesis; L-methionine biosynthesis via salvage pathway; L-methionine from S-methyl-5-thio-alpha-D-ribose 1-phosphate: step 3/6. The protein operates within amino-acid biosynthesis; L-methionine biosynthesis via salvage pathway; L-methionine from S-methyl-5-thio-alpha-D-ribose 1-phosphate: step 4/6. In terms of biological role, bifunctional enzyme that catalyzes the enolization of 2,3-diketo-5-methylthiopentyl-1-phosphate (DK-MTP-1-P) into the intermediate 2-hydroxy-3-keto-5-methylthiopentenyl-1-phosphate (HK-MTPenyl-1-P), which is then dephosphorylated to form the acireductone 1,2-dihydroxy-3-keto-5-methylthiopentene (DHK-MTPene). The sequence is that of Enolase-phosphatase E1 from Leptospira interrogans serogroup Icterohaemorrhagiae serovar copenhageni (strain Fiocruz L1-130).